A 156-amino-acid chain; its full sequence is Ribosomal RNA large subunit methyltransferase H (156 aa).

Residues leucine 73, glycine 104, and 123-128 contribute to the S-adenosyl-L-methionine site; that span reads LSSLTL.

Belongs to the RNA methyltransferase RlmH family. Homodimer.

The protein localises to the cytoplasm. The enzyme catalyses pseudouridine(1915) in 23S rRNA + S-adenosyl-L-methionine = N(3)-methylpseudouridine(1915) in 23S rRNA + S-adenosyl-L-homocysteine + H(+). Specifically methylates the pseudouridine at position 1915 (m3Psi1915) in 23S rRNA. The sequence is that of Ribosomal RNA large subunit methyltransferase H from Neisseria meningitidis serogroup A / serotype 4A (strain DSM 15465 / Z2491).